A 239-amino-acid chain; its full sequence is Ribosomal RNA small subunit methyltransferase G (239 aa).

Residues Gly-79, Phe-84, 130–131, and Arg-149 each bind S-adenosyl-L-methionine; that span reads AE.

The protein belongs to the methyltransferase superfamily. RNA methyltransferase RsmG family.

It localises to the cytoplasm. Specifically methylates the N7 position of a guanine in 16S rRNA. The protein is Ribosomal RNA small subunit methyltransferase G of Lactobacillus delbrueckii subsp. bulgaricus (strain ATCC 11842 / DSM 20081 / BCRC 10696 / JCM 1002 / NBRC 13953 / NCIMB 11778 / NCTC 12712 / WDCM 00102 / Lb 14).